A 171-amino-acid chain; its full sequence is MVMDTNSLRHIFSRVDADKSGSISANELQTSLSNGLGTPLNIRTVQLMVAMFDRDMNGTINFNEFLGLFKYVQDWQTCFRRYDRDNSGSIDLNEFSNALISFGYHLSPQFVNLMMRRFDRNRGSIAFDDFIYACVCLQTLTREFSRYDCRGIGHTVFSFEQFLTSAFAVII.

EF-hand domains follow at residues 3 to 38, 40 to 69, 70 to 105, and 106 to 140; these read MDTN…GLGT, LNIR…LGLF, KYVQ…FGYH, and LSPQ…LQTL. Positions 16, 18, 20, 22, 27, 53, 55, 57, 59, 64, 83, 85, 87, 89, and 94 each coordinate Ca(2+).

Its subcellular location is the cytoplasm. Functionally, calcium-binding protein. In Schistosoma japonicum (Blood fluke), this protein is Sorcin.